A 110-amino-acid chain; its full sequence is Urease subunit beta (110 aa).

It belongs to the urease beta subunit family. As to quaternary structure, heterotrimer of UreA (gamma), UreB (beta) and UreC (alpha) subunits. Three heterotrimers associate to form the active enzyme.

Its subcellular location is the cytoplasm. It carries out the reaction urea + 2 H2O + H(+) = hydrogencarbonate + 2 NH4(+). The protein operates within nitrogen metabolism; urea degradation; CO(2) and NH(3) from urea (urease route): step 1/1. The polypeptide is Urease subunit beta (Pseudoalteromonas translucida (strain TAC 125)).